The following is a 165-amino-acid chain: Chorismate pyruvate-lyase (165 aa).

Substrate contacts are provided by Met35, Arg77, Leu115, and Glu156.

This sequence belongs to the UbiC family. As to quaternary structure, monomer.

Its subcellular location is the cytoplasm. It carries out the reaction chorismate = 4-hydroxybenzoate + pyruvate. The protein operates within cofactor biosynthesis; ubiquinone biosynthesis. In terms of biological role, removes the pyruvyl group from chorismate, with concomitant aromatization of the ring, to provide 4-hydroxybenzoate (4HB) for the ubiquinone pathway. This is Chorismate pyruvate-lyase from Salmonella enteritidis PT4 (strain P125109).